Consider the following 344-residue polypeptide: Photosystem II protein D1 (344 aa).

Threonine 2 carries the post-translational modification N-acetylthreonine. Residue threonine 2 is modified to Phosphothreonine. Helical transmembrane passes span 29 to 46 (YIGW…TATS), 118 to 133 (HFLL…EWEL), and 142 to 156 (WIAV…AATA). Residue histidine 118 participates in chlorophyll a binding. Tyrosine 126 is a pheophytin a binding site. [CaMn4O5] cluster-binding residues include aspartate 170 and glutamate 189. A helical membrane pass occupies residues 197–218 (FHMLGVAGVFGGSLFSAMHGSL). Residue histidine 198 participates in chlorophyll a binding. A quinone contacts are provided by residues histidine 215 and 264 to 265 (SF). Histidine 215 contacts Fe cation. Residue histidine 272 participates in Fe cation binding. The chain crosses the membrane as a helical span at residues 274–288 (FLAAWPVVCIWFTAL). Residues histidine 332, glutamate 333, aspartate 342, and alanine 344 each contribute to the [CaMn4O5] cluster site.

Belongs to the reaction center PufL/M/PsbA/D family. As to quaternary structure, PSII is composed of 1 copy each of membrane proteins PsbA, PsbB, PsbC, PsbD, PsbE, PsbF, PsbH, PsbI, PsbJ, PsbK, PsbL, PsbM, PsbT, PsbX, PsbY, PsbZ, Psb30/Ycf12, at least 3 peripheral proteins of the oxygen-evolving complex and a large number of cofactors. It forms dimeric complexes. The D1/D2 heterodimer binds P680, chlorophylls that are the primary electron donor of PSII, and subsequent electron acceptors. It shares a non-heme iron and each subunit binds pheophytin, quinone, additional chlorophylls, carotenoids and lipids. D1 provides most of the ligands for the Mn4-Ca-O5 cluster of the oxygen-evolving complex (OEC). There is also a Cl(-1) ion associated with D1 and D2, which is required for oxygen evolution. The PSII complex binds additional chlorophylls, carotenoids and specific lipids. serves as cofactor. Post-translationally, tyr-161 forms a radical intermediate that is referred to as redox-active TyrZ, YZ or Y-Z.

Its subcellular location is the plastid. The protein resides in the chloroplast thylakoid membrane. It catalyses the reaction 2 a plastoquinone + 4 hnu + 2 H2O = 2 a plastoquinol + O2. Photosystem II (PSII) is a light-driven water:plastoquinone oxidoreductase that uses light energy to abstract electrons from H(2)O, generating O(2) and a proton gradient subsequently used for ATP formation. It consists of a core antenna complex that captures photons, and an electron transfer chain that converts photonic excitation into a charge separation. The D1/D2 (PsbA/PsbD) reaction center heterodimer binds P680, the primary electron donor of PSII as well as several subsequent electron acceptors. This chain is Photosystem II protein D1, found in Staurastrum punctulatum (Green alga).